Here is a 655-residue protein sequence, read N- to C-terminus: FYVE, RhoGEF and PH domain-containing protein 2 (655 aa).

Residues S10, S39, and S47 each carry the phosphoserine modification. Disordered regions lie at residues 21–52 (NRTP…EPWE) and 84–103 (WRRS…EPEE). Residues 32 to 41 (SLEDQPHSPE) are compositionally biased toward basic and acidic residues. Residues 102 to 290 (EEKRVVRELL…FSAAQHSNAA (189 aa)) form the DH domain. Positions 319 to 418 (TLLREGPVLK…WMQACQAAID (100 aa)) constitute a PH 1 domain. The FYVE-type zinc finger occupies 458 to 518 (DKMVTMCMRC…VCLTCYTFLT (61 aa)). 8 residues coordinate Zn(2+): C464, C467, C481, C484, C489, C492, C510, and C513. The region spanning 544–641 (QSLVCSFLQL…WVTAIKRAAS (98 aa)) is the PH 2 domain. T644 carries the phosphothreonine modification. S654 is modified (phosphoserine).

Lymph node, spleen, B-lymphocytes and macrophages (at protein level). Expressed at high levels in lymph node, spleen, B-lymphocytes and bone marrow macrophages. Expressed at lower levels in mature bone marrow dendritic cells. In both immature and mature B-cells, expression is down-regulated by prior B-cell receptor signaling. Expression remains high in resting B and memory cells but declines upon differentiation into plasma cells.

Its subcellular location is the cytoplasm. The protein resides in the nucleus. The protein localises to the early endosome. It localises to the early endosome membrane. It is found in the cell projection. Its subcellular location is the ruffle membrane. The protein resides in the cytoskeleton. Its function is as follows. Activates CDC42, a member of the Ras-like family of Rho- and Rac proteins, by exchanging bound GDP for free GTP. Activates JNK1 via CDC42 but not RAC1. Binds to phosphatidylinositol 4,5-bisphosphate, phosphatidylinositol 3,4,5-trisphosphate, phosphatidylinositol 5-monophosphate, phosphatidylinositol 4-monophosphate and phosphatidylinositol 3-monophosphate. The sequence is that of FYVE, RhoGEF and PH domain-containing protein 2 (Fgd2) from Mus musculus (Mouse).